We begin with the raw amino-acid sequence, 264 residues long: Regulator of cytoskeleton and endocytosis RVS161 (264 aa).

The 225-residue stretch at 15–239 folds into the BAR domain; sequence ASVIVKDVDK…LDPASRDEYA (225 aa).

The protein localises to the cytoplasm. It localises to the cytoskeleton. Component of a cytoskeletal structure that is required for the formation of endocytic vesicles at the plasma membrane level. Plays an important role in virulence. This chain is Regulator of cytoskeleton and endocytosis RVS161 (RVS161), found in Candida albicans (strain SC5314 / ATCC MYA-2876) (Yeast).